A 216-amino-acid chain; its full sequence is Large ribosomal subunit protein uL4 (216 aa).

The segment at 51-78 (KGRSEVHGSNTKPYKQKGTGRARRGDKK) is disordered. Basic residues predominate over residues 64-76 (YKQKGTGRARRGD).

It belongs to the universal ribosomal protein uL4 family. As to quaternary structure, part of the 50S ribosomal subunit.

In terms of biological role, one of the primary rRNA binding proteins, this protein initially binds near the 5'-end of the 23S rRNA. It is important during the early stages of 50S assembly. It makes multiple contacts with different domains of the 23S rRNA in the assembled 50S subunit and ribosome. Its function is as follows. Forms part of the polypeptide exit tunnel. This is Large ribosomal subunit protein uL4 from Treponema pallidum (strain Nichols).